A 561-amino-acid polypeptide reads, in one-letter code: Putative transport protein KPN78578_08530 (561 aa).

The next 5 membrane-spanning stretches (helical) occupy residues Leu-8–Gly-28, Leu-37–Ile-57, Phe-66–Phe-86, Met-94–Phe-114, and His-158–Ala-178. 2 RCK C-terminal domains span residues Leu-202–Asn-288 and Val-292–Phe-373. Helical transmembrane passes span Leu-383–Phe-403, Phe-406–Leu-426, Phe-447–Gly-467, Ala-478–Leu-498, and Ala-540–Leu-560.

Belongs to the AAE transporter (TC 2.A.81) family. YbjL subfamily.

The protein localises to the cell membrane. In Klebsiella pneumoniae subsp. pneumoniae (strain ATCC 700721 / MGH 78578), this protein is Putative transport protein KPN78578_08530.